Reading from the N-terminus, the 290-residue chain is HTH-type transcriptional activator RhaR (290 aa).

Residues 179–277 enclose the HTH araC/xylS-type domain; sequence DLIMSALQQS…GMTPRDYRQR (99 aa). 2 DNA-binding regions (H-T-H motif) span residues 196–217 and 244–267; these read ADFCHKNQLVERSLKQLFRQQT and ISDIAARCGFEDSNYFSAVFTREA.

As to quaternary structure, binds DNA as a dimer.

It is found in the cytoplasm. Functionally, activates expression of the rhaSR operon in response to L-rhamnose. The sequence is that of HTH-type transcriptional activator RhaR from Yersinia pestis bv. Antiqua (strain Antiqua).